Reading from the N-terminus, the 281-residue chain is Nucleotide-binding protein Tpet_1006 (281 aa).

Position 9–16 (9–16) interacts with ATP; the sequence is GLSGAGKT. Position 58 to 61 (58 to 61) interacts with GTP; the sequence is DVRS.

It belongs to the RapZ-like family.

Functionally, displays ATPase and GTPase activities. In Thermotoga petrophila (strain ATCC BAA-488 / DSM 13995 / JCM 10881 / RKU-1), this protein is Nucleotide-binding protein Tpet_1006.